The sequence spans 173 residues: Phosphopantetheine adenylyltransferase (173 aa).

S9 is a binding site for substrate. ATP is bound by residues 9–10 and H17; that span reads SF. Residues K41, T73, and R87 each contribute to the substrate site. Residues 88 to 90, E98, and 123 to 129 contribute to the ATP site; these read GVR and YQYLSSS.

This sequence belongs to the bacterial CoaD family. In terms of assembly, homohexamer. Mg(2+) serves as cofactor.

Its subcellular location is the cytoplasm. The catalysed reaction is (R)-4'-phosphopantetheine + ATP + H(+) = 3'-dephospho-CoA + diphosphate. It functions in the pathway cofactor biosynthesis; coenzyme A biosynthesis; CoA from (R)-pantothenate: step 4/5. Functionally, reversibly transfers an adenylyl group from ATP to 4'-phosphopantetheine, yielding dephospho-CoA (dPCoA) and pyrophosphate. The sequence is that of Phosphopantetheine adenylyltransferase from Limosilactobacillus fermentum (strain NBRC 3956 / LMG 18251) (Lactobacillus fermentum).